The sequence spans 264 residues: Catenin delta-2 (264 aa).

ARM repeat units follow at residues 20 to 59, 64 to 104, 120 to 162, and 166 to 211; these read NKIKAEIRRQGGIQLLVDLLDHRMTEVHRSACGALRNLVY, DDNK…NLSS, LTNA…NVSS, and EARR…NLSY. The segment at 238–264 is disordered; the sequence is GKDAESSGCWGKKKKKKKSQDQWDGVG.

It belongs to the beta-catenin family. As to quaternary structure, binds to E-cadherin at a juxtamembrane site within the cytoplasmic domain. Binds to PSEN1. Interacts with ZBTB33. Interacts with ARHGEF28. Interacts (via the extreme C-terminus) with FRMPD2 (via the PDZ 2 domain). Interacts with PDZD2. Interacts with CDK5. Interacts with CTNBB1. Interacts with GSK3A and GSK3B. Interacts with DNM2. Interacts with CCDC85B. In terms of processing, O-glycosylated. Phosphorylated by CDK5. Phosphorylated by GSK3B. Predominantly expressed in brain; accumulates in cortical neurons (at protein level).

Its subcellular location is the nucleus. It is found in the cell junction. The protein localises to the adherens junction. It localises to the cell projection. The protein resides in the dendrite. Its subcellular location is the perikaryon. In terms of biological role, has a critical role in neuronal development, particularly in the formation and/or maintenance of dendritic spines and synapses. Involved in the regulation of canonical Wnt signaling. It probably acts on beta-catenin turnover, facilitating beta-catenin interaction with GSK3B, phosphorylation, ubiquitination and degradation. May be involved in neuronal cell adhesion and tissue morphogenesis and integrity by regulating adhesion molecules. Functions as a transcriptional activator when bound to ZBTB33. The polypeptide is Catenin delta-2 (Ctnnd2) (Rattus norvegicus (Rat)).